The primary structure comprises 104 residues: Large ribosomal subunit protein uL24 (104 aa).

This sequence belongs to the universal ribosomal protein uL24 family. Part of the 50S ribosomal subunit.

In terms of biological role, one of two assembly initiator proteins, it binds directly to the 5'-end of the 23S rRNA, where it nucleates assembly of the 50S subunit. One of the proteins that surrounds the polypeptide exit tunnel on the outside of the subunit. The polypeptide is Large ribosomal subunit protein uL24 (Klebsiella pneumoniae (strain 342)).